The sequence spans 268 residues: Endonuclease 8 1 (268 aa).

The active-site Schiff-base intermediate with DNA is P2. Catalysis depends on E3, which acts as the Proton donor. Residue K52 is the Proton donor; for beta-elimination activity of the active site. DNA is bound by residues R125 and N166. The segment at 234-268 adopts an FPG-type zinc-finger fold; the sequence is YVYRRAGEPCRVCGGVIRTALLEGRNVFWCPVCQT. Catalysis depends on R258, which acts as the Proton donor; for delta-elimination activity.

Belongs to the FPG family. It depends on Zn(2+) as a cofactor.

It catalyses the reaction 2'-deoxyribonucleotide-(2'-deoxyribose 5'-phosphate)-2'-deoxyribonucleotide-DNA = a 3'-end 2'-deoxyribonucleotide-(2,3-dehydro-2,3-deoxyribose 5'-phosphate)-DNA + a 5'-end 5'-phospho-2'-deoxyribonucleoside-DNA + H(+). In terms of biological role, involved in base excision repair of DNA damaged by oxidation or by mutagenic agents. Acts as a DNA glycosylase that recognizes and removes damaged bases. Has AP (apurinic/apyrimidinic) lyase activity and introduces nicks in the DNA strand. Cleaves the DNA backbone by beta-delta elimination to generate a single-strand break at the site of the removed base with both 3'- and 5'-phosphates. This is Endonuclease 8 1 (nei1) from Mycobacterium bovis (strain ATCC BAA-935 / AF2122/97).